We begin with the raw amino-acid sequence, 424 residues long: Probable biofilm formation methyltransferase WspC (424 aa).

One can recognise a CheR-type methyltransferase domain in the interval 1–263 (MNEQRFFRFL…IAQSFAYVRH (263 aa)). S-adenosyl-L-methionine contacts are provided by residues T68, R72, E109, D133, 187–188 (NV), and 206–207 (RN). Residues 355–388 (AQVYYWLGLLSDTEGDAQQALSHYRKALYLEPQH) form a TPR repeat.

As to quaternary structure, monomer. The TPR repeat does not mediate self-association.

In terms of biological role, involved in biofilm formation. This Pseudomonas putida (strain ATCC 47054 / DSM 6125 / CFBP 8728 / NCIMB 11950 / KT2440) protein is Probable biofilm formation methyltransferase WspC (wspC).